A 202-amino-acid chain; its full sequence is Ribonuclease HII (202 aa).

The region spanning 18-202 (TYICGVDEAG…FAPVAKLLKQ (185 aa)) is the RNase H type-2 domain. Aspartate 24, glutamate 25, and aspartate 116 together coordinate a divalent metal cation.

This sequence belongs to the RNase HII family. Requires Mn(2+) as cofactor. Mg(2+) serves as cofactor.

The protein localises to the cytoplasm. The catalysed reaction is Endonucleolytic cleavage to 5'-phosphomonoester.. Its function is as follows. Endonuclease that specifically degrades the RNA of RNA-DNA hybrids. The protein is Ribonuclease HII of Acholeplasma laidlawii (strain PG-8A).